A 312-amino-acid polypeptide reads, in one-letter code: MARRRKGRVIHGVILLDKPTGISSNDALQKVKRLYGAEKAGHTGALDPLATGMLPICLGEATKFSQFLLDSDKRYRVIAKLGERTDTSDSDGQVVQTRPVHVDYDTLLACIAKFRGETDQVPSMFSALKYQGRPLYEYARQGIEVPREARKITVYEIELHRFEGDEVEMEVHCSKGTYIRTIVDDLGEMLGCGAHVTMLRRVGVANYPYERMVTLEQLNALVEQAHRDEKAVADVLDPLLLPMDTAVEALPEVNVIPELMTLIQHGQAVQVSGAPSDGMVRITGGEQKLFLGVGEIDDNGKVAPKRLVVYGE.

The active-site Nucleophile is the D47.

Belongs to the pseudouridine synthase TruB family. Type 1 subfamily.

It carries out the reaction uridine(55) in tRNA = pseudouridine(55) in tRNA. In terms of biological role, responsible for synthesis of pseudouridine from uracil-55 in the psi GC loop of transfer RNAs. The sequence is that of tRNA pseudouridine synthase B from Vibrio cholerae serotype O1 (strain M66-2).